The following is a 439-amino-acid chain: C4-dicarboxylate transport protein (439 aa).

The next 9 membrane-spanning stretches (helical) occupy residues 10-30 (LYVQVLAAIVIGVVLGHFYPP), 45-65 (LIKMIIAPVIFCTVVLGIAGM), 77-97 (LALLYFEIVSTLALIVGLVLV), 145-165 (AFAKGDILQVLLISVLFGFAL), 185-205 (VLFAIVGTIMKAAPIGAFGAM), 223-243 (LMGTFYLTCLFFIFAVLGTIT), 290-310 (VVGLVIPTGYSFNLDGTAIYL), 332-352 (TLLAVLLLTSKGAAGITGSGF), and 353-373 (IVLAASLSAVGHLPVAGLALI). The interval 415–439 (LNGQTAEEASAPQALPDRMESRIHH) is disordered.

The protein belongs to the dicarboxylate/amino acid:cation symporter (DAACS) (TC 2.A.23) family.

The protein localises to the cell inner membrane. In terms of biological role, responsible for the transport of dicarboxylates such as succinate, fumarate, and malate from the periplasm across the membrane. The protein is C4-dicarboxylate transport protein of Verminephrobacter eiseniae (strain EF01-2).